Reading from the N-terminus, the 131-residue chain is Profilin-8 (131 aa).

The cysteines at positions 13 and 115 are disulfide-linked. The Involved in PIP2 interaction signature appears at 81 to 97 (AVIRGKKGSGGITVKKT). T111 carries the post-translational modification Phosphothreonine.

This sequence belongs to the profilin family. Occurs in many kinds of cells as a complex with monomeric actin in a 1:1 ratio. Phosphorylated by MAP kinases.

Its subcellular location is the cytoplasm. It is found in the cytoskeleton. In terms of biological role, binds to actin and affects the structure of the cytoskeleton. At high concentrations, profilin prevents the polymerization of actin, whereas it enhances it at low concentrations. The polypeptide is Profilin-8 (Zea mays (Maize)).